The following is a 321-amino-acid chain: Olfactory receptor 52P1 (321 aa).

At 1 to 27 the chain is on the extracellular side; sequence MESPNHTDVDPSVFFLLGIPGLEQFHL. Residue Asn5 is glycosylated (N-linked (GlcNAc...) asparagine). A helical transmembrane segment spans residues 28–48; sequence WLSLPVCGLGTATIVGNITIL. Residues 49–56 are Cytoplasmic-facing; it reads VVVATEPV. A helical membrane pass occupies residues 57–77; that stretch reads LHKPVYLFLCMLSTIDLAASV. The Extracellular portion of the chain corresponds to 78 to 101; it reads STVPKLLAIFWCGAGHISASACLA. Residues Cys99 and Cys191 are joined by a disulfide bond. The helical transmembrane segment at 102-122 threads the bilayer; sequence QMFFIHAFCMMESTVLLAMAF. At 123-141 the chain is on the cytoplasmic side; sequence DRYVAICHPLRYATILTDT. Residues 142–162 traverse the membrane as a helical segment; the sequence is IIAHIGVAAVVRGSLLMLPCP. Over 163-198 the chain is Extracellular; that stretch reads FLIGRLNFCQSHVILHTYCEHMAVVKLACGDTRPNR. Residues 199 to 219 traverse the membrane as a helical segment; sequence VYGLTAALLVIGVDLFCIGLS. At 220 to 239 the chain is on the cytoplasmic side; that stretch reads YALSAQAVLRLSSHEARSKA. The helical transmembrane segment at 240–260 threads the bilayer; it reads LGTCGSHVCVILISYTPALFS. Residues 261 to 275 lie on the Extracellular side of the membrane; it reads FFTHRFGHHVPVHIH. A helical transmembrane segment spans residues 276-296; the sequence is ILLANVYLLLPPALNPVVYGV. Residues 297–315 lie on the Cytoplasmic side of the membrane; the sequence is KTKQIRKRVVRVFQSGQGM.

The protein belongs to the G-protein coupled receptor 1 family.

The protein resides in the cell membrane. Functionally, odorant receptor. The sequence is that of Olfactory receptor 52P1 from Homo sapiens (Human).